The following is a 940-amino-acid chain: Isoleucine--tRNA ligase (940 aa).

Residues 59–69 (PYANGDIHIGH) carry the 'HIGH' region motif. Glutamate 563 contributes to the L-isoleucyl-5'-AMP binding site. The 'KMSKS' region motif lies at 604 to 608 (KMSKS). ATP is bound at residue lysine 607. Residues cysteine 903, cysteine 906, cysteine 923, and cysteine 926 each contribute to the Zn(2+) site.

It belongs to the class-I aminoacyl-tRNA synthetase family. IleS type 1 subfamily. Monomer. It depends on Zn(2+) as a cofactor.

The protein localises to the cytoplasm. The enzyme catalyses tRNA(Ile) + L-isoleucine + ATP = L-isoleucyl-tRNA(Ile) + AMP + diphosphate. In terms of biological role, catalyzes the attachment of isoleucine to tRNA(Ile). As IleRS can inadvertently accommodate and process structurally similar amino acids such as valine, to avoid such errors it has two additional distinct tRNA(Ile)-dependent editing activities. One activity is designated as 'pretransfer' editing and involves the hydrolysis of activated Val-AMP. The other activity is designated 'posttransfer' editing and involves deacylation of mischarged Val-tRNA(Ile). This is Isoleucine--tRNA ligase from Wigglesworthia glossinidia brevipalpis.